The chain runs to 244 residues: tRNA pseudouridine synthase A (244 aa).

D52 acts as the Nucleophile in catalysis. Residue Y110 coordinates substrate.

The protein belongs to the tRNA pseudouridine synthase TruA family. As to quaternary structure, homodimer.

The enzyme catalyses uridine(38/39/40) in tRNA = pseudouridine(38/39/40) in tRNA. Functionally, formation of pseudouridine at positions 38, 39 and 40 in the anticodon stem and loop of transfer RNAs. This Clostridium acetobutylicum (strain ATCC 824 / DSM 792 / JCM 1419 / IAM 19013 / LMG 5710 / NBRC 13948 / NRRL B-527 / VKM B-1787 / 2291 / W) protein is tRNA pseudouridine synthase A.